The sequence spans 105 residues: DNA-directed RNA polymerase subunit omega (105 aa).

This sequence belongs to the RNA polymerase subunit omega family. The RNAP catalytic core consists of 2 alpha, 1 beta, 1 beta' and 1 omega subunit. When a sigma factor is associated with the core the holoenzyme is formed, which can initiate transcription.

The catalysed reaction is RNA(n) + a ribonucleoside 5'-triphosphate = RNA(n+1) + diphosphate. Promotes RNA polymerase assembly. Latches the N- and C-terminal regions of the beta' subunit thereby facilitating its interaction with the beta and alpha subunits. In Streptococcus uberis (strain ATCC BAA-854 / 0140J), this protein is DNA-directed RNA polymerase subunit omega.